The sequence spans 212 residues: MQTRKTGVRAQQADRTRDNILKAAVKVFSKEGFTGGRIEQISTLAKSNDRMIYYYFGSKEKLFISVLEHIYASFNQAEAKLRLDLADPEQALRELVAFIWDYYVRHPEFVTILATENLHQGLHARKSQNLRALSGEAVGVLRPIIEAGQAKGLFRDDICITHAYLMIASLCYFYNSNRHTLSSFLAVDLADKQAKADWLTFISDLALRGLRR.

The HTH tetR-type domain occupies 14-74 (DRTRDNILKA…SVLEHIYASF (61 aa)). Residues 37-56 (RIEQISTLAKSNDRMIYYYF) constitute a DNA-binding region (H-T-H motif).

Its pathway is cofactor degradation; nicotinate degradation [regulation]. Functionally, transcriptional repressor for the nicAB operon, encoding the upper aerobic nicotinate degradation pathway. Acts under non-induced conditions: repression of the nicAB operon becomes alleviated in presence of either nicotinate or 6-hydroxynicotinate (6HNA). This chain is HTH-type transcriptional repressor NicS (nicS), found in Pseudomonas putida (strain ATCC 47054 / DSM 6125 / CFBP 8728 / NCIMB 11950 / KT2440).